The primary structure comprises 267 residues: 14-3-3-like protein GF14 chi (267 aa).

Alanine 2 is subject to N-acetylalanine. Residues serine 72 and serine 195 each carry the phosphoserine modification. Threonine 216 bears the Phosphothreonine mark. The residue at position 267 (serine 267) is a Phosphoserine.

This sequence belongs to the 14-3-3 family. As to quaternary structure, interacts with TPK1. Interacts with the isocitrate dehydrogenase IDH3, and malate dehydrogenases MDH1 and MDH2. Interacts with DREB1A and DREB1B in the nucleus. Interacts with CINV1.

The protein localises to the nucleus. The protein resides in the cytoplasm. Is associated with a DNA binding complex that binds to the G box, a well-characterized cis-acting DNA regulatory element found in plant genes. Involved in the regulation of nutrient metabolism. In Arabidopsis thaliana (Mouse-ear cress), this protein is 14-3-3-like protein GF14 chi (GRF1).